The sequence spans 908 residues: Probable RNA-directed DNA polymerase from transposon X-element (908 aa).

A Reverse transcriptase domain is found at 481 to 752; it reads AIVRLQYFPY…NAAKYLGVLL (272 aa). A disordered region spans residues 883 to 908; it reads RPPRRLNRRQPRDLITRSPLTRVRRS.

Mg(2+) serves as cofactor. Mn(2+) is required as a cofactor.

It catalyses the reaction DNA(n) + a 2'-deoxyribonucleoside 5'-triphosphate = DNA(n+1) + diphosphate. In Drosophila melanogaster (Fruit fly), this protein is Probable RNA-directed DNA polymerase from transposon X-element (X-element\ORF2).